The sequence spans 285 residues: Diaminopimelate epimerase (285 aa).

The substrate site is built by Asn-15 and Asn-68. Catalysis depends on Cys-77, which acts as the Proton donor. Residues 78 to 79, Asn-165, Asn-201, and 219 to 220 contribute to the substrate site; these read GN and ER. The Proton acceptor role is filled by Cys-228. 229–230 is a binding site for substrate; it reads GT.

The protein belongs to the diaminopimelate epimerase family. As to quaternary structure, homodimer.

It localises to the cytoplasm. The catalysed reaction is (2S,6S)-2,6-diaminopimelate = meso-2,6-diaminopimelate. Its pathway is amino-acid biosynthesis; L-lysine biosynthesis via DAP pathway; DL-2,6-diaminopimelate from LL-2,6-diaminopimelate: step 1/1. Functionally, catalyzes the stereoinversion of LL-2,6-diaminopimelate (L,L-DAP) to meso-diaminopimelate (meso-DAP), a precursor of L-lysine and an essential component of the bacterial peptidoglycan. In Synechococcus sp. (strain JA-3-3Ab) (Cyanobacteria bacterium Yellowstone A-Prime), this protein is Diaminopimelate epimerase.